A 471-amino-acid chain; its full sequence is (13S,14R)-1,13-dihydroxy-N-methylcanadine 13-O-acetyltransferase AT1 (471 aa).

It belongs to the plant acyltransferase family.

It carries out the reaction (13S,14R)-1,13-dihydroxy-N-methylcanadine + acetyl-CoA = (13S,14R)-13-O-acetyl-1-hydroxy-N-methylcanadine + CoA. It participates in alkaloid biosynthesis. Its function is as follows. Acetyltransferase involved in the biosynthesis of the benzylisoquinoline alkaloid noscapine. Converts (13S,14R)-1,13-dihydroxy-N-methylcanadine to (13S,14R)-13-O-acetyl-1-hydroxy-N-methylcanadine. The protein is (13S,14R)-1,13-dihydroxy-N-methylcanadine 13-O-acetyltransferase AT1 of Papaver somniferum (Opium poppy).